A 113-amino-acid polypeptide reads, in one-letter code: Protein INCREASED RESISTANCE TO MYZUS PERSICAE 1 (113 aa).

The segment at 56-100 (DFLKTCSLCNRSLCHHRDIYMYRGNNAFCSLECREKQIKLDEKKA) adopts an FLZ-type zinc-finger fold.

The protein belongs to the FLZ family. In terms of assembly, interacts with KIN10 and KIN11 via its FLZ-type zinc finger domain. Interacts with KINB3 via its N-terminal part. Interacts with GEBP.

Its subcellular location is the nucleus. The protein resides in the cytoplasm. In terms of biological role, may act as an adapter to facilitate the interaction of SnRK1 complex with effector proteins, conferring tissue- and stimulus-type specific differences in the SnRK1 regulation pathway. The polypeptide is Protein INCREASED RESISTANCE TO MYZUS PERSICAE 1 (Arabidopsis thaliana (Mouse-ear cress)).